A 381-amino-acid chain; its full sequence is DNA replication and repair protein RecF (381 aa).

30–37 (GENAQGKT) is an ATP binding site.

This sequence belongs to the RecF family.

The protein resides in the cytoplasm. Functionally, the RecF protein is involved in DNA metabolism; it is required for DNA replication and normal SOS inducibility. RecF binds preferentially to single-stranded, linear DNA. It also seems to bind ATP. This Lactobacillus delbrueckii subsp. bulgaricus (strain ATCC 11842 / DSM 20081 / BCRC 10696 / JCM 1002 / NBRC 13953 / NCIMB 11778 / NCTC 12712 / WDCM 00102 / Lb 14) protein is DNA replication and repair protein RecF.